A 177-amino-acid polypeptide reads, in one-letter code: Isopentenyl-diphosphate Delta-isomerase (177 aa).

The Mn(2+) site is built by H22 and H28. A Nudix hydrolase domain is found at L26–I160. C62 is a catalytic residue. H64 serves as a coordination point for Mn(2+). Residue E82 participates in Mg(2+) binding. Positions 108 and 110 each coordinate Mn(2+). The active site involves E110.

It belongs to the IPP isomerase type 1 family. Mg(2+) serves as cofactor. It depends on Mn(2+) as a cofactor.

The protein localises to the cytoplasm. It carries out the reaction isopentenyl diphosphate = dimethylallyl diphosphate. Its pathway is isoprenoid biosynthesis; dimethylallyl diphosphate biosynthesis; dimethylallyl diphosphate from isopentenyl diphosphate: step 1/1. It functions in the pathway porphyrin-containing compound metabolism; chlorophyll biosynthesis. In terms of biological role, catalyzes the 1,3-allylic rearrangement of the homoallylic substrate isopentenyl (IPP) to its highly electrophilic allylic isomer, dimethylallyl diphosphate (DMAPP). The protein is Isopentenyl-diphosphate Delta-isomerase of Cereibacter sphaeroides (strain KD131 / KCTC 12085) (Rhodobacter sphaeroides).